The chain runs to 338 residues: Phospho-2-dehydro-3-deoxyheptonate aldolase (338 aa).

The protein belongs to the class-I DAHP synthase family. As to quaternary structure, homotetramer. A divalent metal cation is required as a cofactor.

It catalyses the reaction D-erythrose 4-phosphate + phosphoenolpyruvate + H2O = 7-phospho-2-dehydro-3-deoxy-D-arabino-heptonate + phosphate. The protein operates within metabolic intermediate biosynthesis; chorismate biosynthesis; chorismate from D-erythrose 4-phosphate and phosphoenolpyruvate: step 1/7. Inhibited by L-phenylalanine and L-tyrosine. Its function is as follows. Catalyzes the condensation of phosphoenolpyruvate (PEP) and D-erythrose-4-phosphate (E4P) giving rise to 3-deoxy-D-arabino-heptulosonate-7-phosphate (DAHP). The protein is Phospho-2-dehydro-3-deoxyheptonate aldolase (aroF) of Thermotoga maritima (strain ATCC 43589 / DSM 3109 / JCM 10099 / NBRC 100826 / MSB8).